The following is a 305-amino-acid chain: Mitochondrial uncoupling protein 2 (305 aa).

Solcar repeat units lie at residues 10 to 104 (ISFL…VKTL), 114 to 205 (IPLY…IKET), and 214 to 297 (DSVL…VKKV). 6 helical membrane-spanning segments follow: residues 16 to 36 (FICSAFAACFAELCTIPLDTA), 73 to 93 (ISGLWKGVIAGLHRQCIYGGL), 120 to 140 (ILAALLTGAIAIIVANPTDLV), 179 to 199 (TGLGPNIARNAIVNAAELASY), 220 to 240 (LLAGLAAGFFAVCIGSPIDVV), and 270 to 290 (YKGFLPNFTRLGTWNAIMFLT).

Belongs to the mitochondrial carrier (TC 2.A.29) family.

The protein resides in the mitochondrion inner membrane. Functionally, PUMPS are mitochondrial transporter proteins that create proton leaks across the inner mitochondrial membrane, thus uncoupling oxidative phosphorylation. This leads to a decrease in the efficiency of oxidative phosphorylation and an increase in heat production. May be involved in protecting plant cells against oxidative stress damage. The protein is Mitochondrial uncoupling protein 2 (PUMP2) of Arabidopsis thaliana (Mouse-ear cress).